A 352-amino-acid chain; its full sequence is MQYWIPKALAVSVLVSLSGCSVFTSDAHNERNYRAHEPVKAPASLSQPAQDPVYKMDVGQYDNNPEATNYRPPAQVLTIAKGSWVEEADKQARIYFDKNDGIEDLDVFIWDSIQAVLADNNISATQLDKTQGTLVTDWYAIVKPEESWLWGNDESVDLERFKFTIEEKEHQRTASLTAELIDFKGDKPLTDLLKQQLEVRALNQVVSEFDYRYRQLEVDMRKRQGIISLELGFDNKGNAALVTEQAYDTVFDRFSGFLERLSFTIVEINQETGLITADYAKVESSVWDSIWGDEPTELPIDEGQYQILVSKTKQGGTSLTWMDDKGETLEPGTMNGLQQALEAALIKRGIKI.

The signal sequence occupies residues Met1–Gly19. Cys20 is lipidated: N-palmitoyl cysteine. Residue Cys20 is the site of S-diacylglycerol cysteine attachment.

The protein belongs to the BamC family. Part of the Bam complex.

The protein localises to the cell outer membrane. Functionally, part of the outer membrane protein assembly complex, which is involved in assembly and insertion of beta-barrel proteins into the outer membrane. In Pseudoalteromonas sp. (strain SM9913), this protein is Outer membrane protein assembly factor BamC.